We begin with the raw amino-acid sequence, 257 residues long: MEILQFIGYGNMAQAILEGSHEILSKRFILEITGRNPEKIAPFLQEKNIQAQIVPYKDAIDIHQKFVFLLFKPYNLKDFNYQGQAKSVLSALAGVNFEALSNAINSLHYLKCMPNIASKFALSSTAVCEKSVAPSISEKALNIIESFGNCVRVGNEEQVDSSVATNGSALAFLSLVASSLKDAGIREGLNAKDSLELVKMSFKGFAKLLEKERPEMIIEQICTPKGATIEGLSVLEKKGVRGAFIKACHESVKKMRL.

Belongs to the pyrroline-5-carboxylate reductase family.

The protein resides in the cytoplasm. It carries out the reaction L-proline + NADP(+) = (S)-1-pyrroline-5-carboxylate + NADPH + 2 H(+). The enzyme catalyses L-proline + NAD(+) = (S)-1-pyrroline-5-carboxylate + NADH + 2 H(+). Its pathway is amino-acid biosynthesis; L-proline biosynthesis; L-proline from L-glutamate 5-semialdehyde: step 1/1. Its function is as follows. Catalyzes the reduction of 1-pyrroline-5-carboxylate (PCA) to L-proline. This chain is Pyrroline-5-carboxylate reductase, found in Helicobacter pylori (strain J99 / ATCC 700824) (Campylobacter pylori J99).